A 219-amino-acid polypeptide reads, in one-letter code: Large ribosomal subunit protein uL1 (219 aa).

It belongs to the universal ribosomal protein uL1 family. As to quaternary structure, component of the large ribosomal subunit.

It is found in the cytoplasm. The protein is Large ribosomal subunit protein uL1 (RPL1) of Encephalitozoon cuniculi (strain GB-M1) (Microsporidian parasite).